A 256-amino-acid polypeptide reads, in one-letter code: Thiazole synthase (256 aa).

Lysine 95 (schiff-base intermediate with DXP) is an active-site residue. 1-deoxy-D-xylulose 5-phosphate-binding positions include glycine 156, 182–183 (AG), and 204–205 (NT).

The protein belongs to the ThiG family. As to quaternary structure, homotetramer. Forms heterodimers with either ThiH or ThiS.

Its subcellular location is the cytoplasm. The catalysed reaction is [ThiS sulfur-carrier protein]-C-terminal-Gly-aminoethanethioate + 2-iminoacetate + 1-deoxy-D-xylulose 5-phosphate = [ThiS sulfur-carrier protein]-C-terminal Gly-Gly + 2-[(2R,5Z)-2-carboxy-4-methylthiazol-5(2H)-ylidene]ethyl phosphate + 2 H2O + H(+). It participates in cofactor biosynthesis; thiamine diphosphate biosynthesis. In terms of biological role, catalyzes the rearrangement of 1-deoxy-D-xylulose 5-phosphate (DXP) to produce the thiazole phosphate moiety of thiamine. Sulfur is provided by the thiocarboxylate moiety of the carrier protein ThiS. In vitro, sulfur can be provided by H(2)S. This is Thiazole synthase from Salmonella paratyphi B (strain ATCC BAA-1250 / SPB7).